We begin with the raw amino-acid sequence, 526 residues long: Phosphoenolpyruvate carboxylase (526 aa).

Belongs to the PEPCase type 2 family. As to quaternary structure, homotetramer. The cofactor is Mg(2+).

It carries out the reaction oxaloacetate + phosphate = phosphoenolpyruvate + hydrogencarbonate. In terms of biological role, catalyzes the irreversible beta-carboxylation of phosphoenolpyruvate (PEP) to form oxaloacetate (OAA), a four-carbon dicarboxylic acid source for the tricarboxylic acid cycle. The sequence is that of Phosphoenolpyruvate carboxylase from Methanosarcina mazei (strain ATCC BAA-159 / DSM 3647 / Goe1 / Go1 / JCM 11833 / OCM 88) (Methanosarcina frisia).